Reading from the N-terminus, the 105-residue chain is Small ribosomal subunit protein uS10 (105 aa).

The protein belongs to the universal ribosomal protein uS10 family. As to quaternary structure, part of the 30S ribosomal subunit.

Functionally, involved in the binding of tRNA to the ribosomes. The chain is Small ribosomal subunit protein uS10 from Crocosphaera subtropica (strain ATCC 51142 / BH68) (Cyanothece sp. (strain ATCC 51142)).